The primary structure comprises 146 residues: MRYSCVLLLLATVACLLIPQTGGSTATTTSTSASATTTTSASATTTTASDTTTTTAATTTTSSSSSKSKKKKRTYHYTRHVYRPKRIRHIYRHKADDDESSTDRTSTRSRRRRRSSSSSSSSGSTSSRSGNSRIRRRRARSARRLS.

Positions 1-23 (MRYSCVLLLLATVACLLIPQTGG) are cleaved as a signal peptide. The tract at residues 23-146 (GSTATTTSTS…RRARSARRLS (124 aa)) is disordered. A compositionally biased stretch (low complexity) spans 24–66 (STATTTSTSASATTTTSASATTTTASDTTTTTAATTTTSSSSS). Repeat copies occupy residues 31 to 38 (TSASATTT), 39 to 46 (TSASATTT), 47 to 53 (TASDTTT), and 54 to 61 (TTAATTTT). Residues 31 to 61 (TSASATTTTSASATTTTASDTTTTTAATTTT) form a 4 X 8 AA approximate tandem repeats of T-S-A-S-A-T-T-T region. The span at 67–92 (KSKKKKRTYHYTRHVYRPKRIRHIYR) shows a compositional bias: basic residues. A compositionally biased stretch (basic and acidic residues) spans 93–106 (HKADDDESSTDRTS). Over residues 116–132 (SSSSSSSGSTSSRSGNS) the composition is skewed to low complexity. Over residues 133-146 (RIRRRRARSARRLS) the composition is skewed to basic residues.

As to expression, salivary gland specific.

It is found in the secreted. This chain is Protein new-glue 3 (ng3), found in Drosophila melanogaster (Fruit fly).